The sequence spans 156 residues: S-ribosylhomocysteine lyase (156 aa).

Residues histidine 56, histidine 60, and cysteine 123 each contribute to the Fe cation site.

The protein belongs to the LuxS family. As to quaternary structure, homodimer. It depends on Fe cation as a cofactor.

The catalysed reaction is S-(5-deoxy-D-ribos-5-yl)-L-homocysteine = (S)-4,5-dihydroxypentane-2,3-dione + L-homocysteine. Involved in the synthesis of autoinducer 2 (AI-2) which is secreted by bacteria and is used to communicate both the cell density and the metabolic potential of the environment. The regulation of gene expression in response to changes in cell density is called quorum sensing. Catalyzes the transformation of S-ribosylhomocysteine (RHC) to homocysteine (HC) and 4,5-dihydroxy-2,3-pentadione (DPD). The protein is S-ribosylhomocysteine lyase of Staphylococcus saprophyticus subsp. saprophyticus (strain ATCC 15305 / DSM 20229 / NCIMB 8711 / NCTC 7292 / S-41).